The following is a 479-amino-acid chain: ATP-dependent protease ATPase subunit HslU (479 aa).

Residues isoleucine 32, 74 to 79 (GVGKTE), aspartate 290, glutamate 355, and arginine 427 contribute to the ATP site.

Belongs to the ClpX chaperone family. HslU subfamily. A double ring-shaped homohexamer of HslV is capped on each side by a ring-shaped HslU homohexamer. The assembly of the HslU/HslV complex is dependent on binding of ATP.

The protein resides in the cytoplasm. Functionally, ATPase subunit of a proteasome-like degradation complex; this subunit has chaperone activity. The binding of ATP and its subsequent hydrolysis by HslU are essential for unfolding of protein substrates subsequently hydrolyzed by HslV. HslU recognizes the N-terminal part of its protein substrates and unfolds these before they are guided to HslV for hydrolysis. The sequence is that of ATP-dependent protease ATPase subunit HslU from Leptospira interrogans serogroup Icterohaemorrhagiae serovar copenhageni (strain Fiocruz L1-130).